We begin with the raw amino-acid sequence, 201 residues long: Auxin-binding protein 1 (201 aa).

The signal sequence occupies residues 1-38 (MAPDLSELAAAAAARGAYLAGVGVAVLLAASFLPVAES). Residues Cys-40 and Cys-193 are joined by a disulfide bond. Zn(2+) is bound by residues His-95, His-97, and Glu-101. N-linked (GlcNAc...) asparagine glycosylation is present at Asn-133. His-144 lines the Zn(2+) pocket. The Prevents secretion from ER signature appears at 198–201 (KDEL).

In terms of assembly, homodimer. Glycosylated. As to expression, expressed in roots, coleoptiles, leaves, stems, tassels and ears.

It localises to the endoplasmic reticulum lumen. Functionally, receptor for the plant hormone auxin. In Zea mays (Maize), this protein is Auxin-binding protein 1.